Consider the following 485-residue polypeptide: MFS-type transporter phm3 (485 aa).

Residues M1–T22 are disordered. The next 12 helical transmembrane spans lie at F55–A75, I83–L103, L113–S133, F144–L164, A175–V195, W203–M223, P278–F298, G317–L337, L357–S377, W384–P404, A421–P441, and L449–V469.

This sequence belongs to the major facilitator superfamily.

The protein resides in the cell membrane. In terms of biological role, MFS-type transporter; part of the gene cluster that mediates the biosynthesis of the trans-fused decalin-containing tetramic acid phomasetin. In Pyrenochaetopsis sp, this protein is MFS-type transporter phm3.